We begin with the raw amino-acid sequence, 345 residues long: tRNA dimethylallyltransferase (345 aa).

Residue 9-16 coordinates ATP; it reads GPTASGKS. A substrate-binding site is contributed by 11–16; that stretch reads TASGKS. Interaction with substrate tRNA stretches follow at residues 34–37 and 195–199; these read DSMQ and QRMIR.

It belongs to the IPP transferase family. Monomer. Requires Mg(2+) as cofactor.

It carries out the reaction adenosine(37) in tRNA + dimethylallyl diphosphate = N(6)-dimethylallyladenosine(37) in tRNA + diphosphate. Functionally, catalyzes the transfer of a dimethylallyl group onto the adenine at position 37 in tRNAs that read codons beginning with uridine, leading to the formation of N6-(dimethylallyl)adenosine (i(6)A). In Orientia tsutsugamushi (strain Ikeda) (Rickettsia tsutsugamushi), this protein is tRNA dimethylallyltransferase.